Consider the following 207-residue polypeptide: Small ribosomal subunit protein uS4 (207 aa).

The S4 RNA-binding domain occupies 96–156; it reads RRLDNVVYRL…EKFKTSSFIA (61 aa).

It belongs to the universal ribosomal protein uS4 family. Part of the 30S ribosomal subunit. Contacts protein S5. The interaction surface between S4 and S5 is involved in control of translational fidelity.

Its function is as follows. One of the primary rRNA binding proteins, it binds directly to 16S rRNA where it nucleates assembly of the body of the 30S subunit. Functionally, with S5 and S12 plays an important role in translational accuracy. This is Small ribosomal subunit protein uS4 from Leptospira interrogans serogroup Icterohaemorrhagiae serovar copenhageni (strain Fiocruz L1-130).